A 198-amino-acid polypeptide reads, in one-letter code: UPF0098 protein PH1269 (198 aa).

The protein belongs to the UPF0098 family.

The protein is UPF0098 protein PH1269 of Pyrococcus horikoshii (strain ATCC 700860 / DSM 12428 / JCM 9974 / NBRC 100139 / OT-3).